A 625-amino-acid chain; its full sequence is FMRFamide-activated amiloride-sensitive sodium channel (625 aa).

At 1–67 the chain is on the cytoplasmic side; that stretch reads MKYTSAATKP…IVTSRDTKRK (67 aa). The helical transmembrane segment at 68–89 threads the bilayer; sequence VIWALLVIAGFTAATLQLSLLV. Residues 90–536 lie on the Extracellular side of the membrane; sequence RKYLQFQVVE…LADLFADIGG (447 aa). Residues Asn-134, Asn-196, Asn-303, Asn-349, Asn-365, Asn-372, and Asn-473 are each glycosylated (N-linked (GlcNAc...) asparagine). A helical transmembrane segment spans residues 537–557; that stretch reads TLGLWMGISVLTIMELIELVI. Residues 558 to 625 lie on the Cytoplasmic side of the membrane; it reads RLTGLVFNSE…DFRRGVESPV (68 aa). A disordered region spans residues 570-591; sequence LPRGPTTVNNNNGSNNHSQSTS. Residues 575-591 are compositionally biased toward low complexity; that stretch reads TTVNNNNGSNNHSQSTS.

This sequence belongs to the amiloride-sensitive sodium channel (TC 1.A.6) family. As to expression, muscle and nervous tissue.

It localises to the membrane. Its function is as follows. FMRFamide-gated ionotropic receptor. The sequence is that of FMRFamide-activated amiloride-sensitive sodium channel from Cornu aspersum (Brown garden snail).